Reading from the N-terminus, the 374-residue chain is UPF0754 membrane protein SA1664 (374 aa).

A run of 2 helical transmembrane segments spans residues 4 to 24 (LFII…TNVI) and 354 to 374 (SLGF…AIFV).

The protein belongs to the UPF0754 family.

It localises to the cell membrane. This chain is UPF0754 membrane protein SA1664, found in Staphylococcus aureus (strain N315).